Here is a 465-residue protein sequence, read N- to C-terminus: GTPase Der (465 aa).

EngA-type G domains follow at residues 3 to 166 (FLVA…LNEY) and 184 to 358 (IHFS…ACAN). Residues 9–16 (GRANVGKS), 56–60 (DTGGI), 118–121 (NKVD), 190–197 (GRPNVGKS), 237–241 (DTAGV), and 302–305 (NKWD) each bind GTP. One can recognise a KH-like domain in the interval 359 to 443 (KKITTADATC…PIVFEFKQSE (85 aa)). Residues 446 to 465 (FADRKNKRSKDEGSKSKKVK) are disordered.

This sequence belongs to the TRAFAC class TrmE-Era-EngA-EngB-Septin-like GTPase superfamily. EngA (Der) GTPase family. Associates with the 50S ribosomal subunit.

GTPase that plays an essential role in the late steps of ribosome biogenesis. The polypeptide is GTPase Der (Francisella tularensis subsp. mediasiatica (strain FSC147)).